The chain runs to 177 residues: Basic form of pathogenesis-related protein 1 (177 aa).

A signal peptide spans 1 to 23 (MGFLTTIVACFITFAILIHSSKA). Gln24 carries the post-translational modification Pyrrolidone carboxylic acid. Residues 31 to 147 (LNPHNAARRQ…NGWFFITCNY (117 aa)) enclose the SCP domain.

The protein belongs to the CRISP family. Two disulfide bonds are present.

In terms of biological role, probably involved in the defense reaction of plants against pathogens. The protein is Basic form of pathogenesis-related protein 1 of Nicotiana tabacum (Common tobacco).